An 820-amino-acid polypeptide reads, in one-letter code: MNESYQPTLIEQLAQEYWEENETFEVKEDLSREKFYCLSMLPYPSGDLHMGHVRNYTIGDVIARYQIHKGRNVLQPMGWDAFGLPAENAAIQRELPPAEWTRKNIKKMRKQLKQLGFAYDWSREITTCDSTYYRWEQWLFLQLYKKGLAYKKNAIVNWDPVDQTVLANEQIVDGRGWRSGAVVERREISQWFLKITDYSEELLKDLDELKEWPEQVITMQRNWIGQSQGVIINFNLEKGPDKLQVYTTRPDTLMGVTYLAIAPEHPLAKERAKKSKKIAAFLKKCKQTRVAEADIATQEKEGIDSGLFAVHPLSKEKLPIWIANFVLMEYASGVVMAVPAHDERDHEFALKYDLPLKPVIEPADGHDWDYNQAAYTNPGKLINSGSFNDIDSKTAFNLIADYLKNNGAGSRQTHYRLRDWGISRQRYWGTPIPIIYCKTCGTVPVPENQLPVLLPEDIIPTGHGSPLKETASFYKTRCPVCNKPATRETDTMDTFVESSWYYARYSCPDQDKVMLDDRAKYWTPVDQYIGGIEHAVMHLLYARFMHKILRDLGLLNSNEPFIRLLTQGMVLKDGAKMSKSKGNVVTPQSLIKKYGADTVRLFIIFAAPPEQDLEWSDSGVEGAYRFLKKLWGFSYRIKDALLAINQQKERSNYQWEAPEHRQTRQQIHECLQQANIDMERLQFNTVVSAVMKILNILIKLTTDNDAEAHLIREGTGILLRLLSPITPHISHHLWQSLGFGGDILDTPWPRPDPKALQTTELELIVQINGKLRGRIQVPTEASKEIIESTALNQENVQRHLADKKIKKVIVVPKKLINIVV.

Residues 42–52 carry the 'HIGH' region motif; the sequence is PYPSGDLHMGH. The 'KMSKS' region signature appears at 576–580; the sequence is KMSKS. Residue Lys-579 participates in ATP binding.

It belongs to the class-I aminoacyl-tRNA synthetase family.

It is found in the cytoplasm. It catalyses the reaction tRNA(Leu) + L-leucine + ATP = L-leucyl-tRNA(Leu) + AMP + diphosphate. This is Leucine--tRNA ligase from Coxiella burnetii (strain CbuG_Q212) (Coxiella burnetii (strain Q212)).